The chain runs to 88 residues: Sec-independent protein translocase protein TatA (88 aa).

A helical membrane pass occupies residues 1–21 (MNLGPTEILLILVIVVLLFGA). Residues 46–56 (SNDDQRYEEQQ) are compositionally biased toward basic and acidic residues. The segment at 46-88 (SNDDQRYEEQQQQRQIAAQAQQQVVNPVEIPQPQPTDIQRPQQ) is disordered. Residues 57–68 (QQRQIAAQAQQQ) show a composition bias toward low complexity.

This sequence belongs to the TatA/E family. The Tat system comprises two distinct complexes: a TatABC complex, containing multiple copies of TatA, TatB and TatC subunits, and a separate TatA complex, containing only TatA subunits. Substrates initially bind to the TatABC complex, which probably triggers association of the separate TatA complex to form the active translocon.

It localises to the cell membrane. Part of the twin-arginine translocation (Tat) system that transports large folded proteins containing a characteristic twin-arginine motif in their signal peptide across membranes. TatA could form the protein-conducting channel of the Tat system. The sequence is that of Sec-independent protein translocase protein TatA from Corynebacterium diphtheriae (strain ATCC 700971 / NCTC 13129 / Biotype gravis).